The chain runs to 449 residues: Glutamate--tRNA ligase (449 aa).

The 'HIGH' region signature appears at 10–20 (PSPTGHLHIGN). The short motif at 214-218 (KLSKR) is the 'KMSKS' region element. K217 is an ATP binding site.

Belongs to the class-I aminoacyl-tRNA synthetase family. Glutamate--tRNA ligase type 1 subfamily. In terms of assembly, monomer.

Its subcellular location is the cytoplasm. The enzyme catalyses tRNA(Glu) + L-glutamate + ATP = L-glutamyl-tRNA(Glu) + AMP + diphosphate. Its function is as follows. Catalyzes the attachment of glutamate to tRNA(Glu) in a two-step reaction: glutamate is first activated by ATP to form Glu-AMP and then transferred to the acceptor end of tRNA(Glu). The polypeptide is Glutamate--tRNA ligase (Acholeplasma laidlawii (strain PG-8A)).